We begin with the raw amino-acid sequence, 407 residues long: Arginine biosynthesis bifunctional protein ArgJ (407 aa).

6 residues coordinate substrate: T157, K183, T194, E280, N402, and T407. The active-site Nucleophile is the T194.

It belongs to the ArgJ family. As to quaternary structure, heterotetramer of two alpha and two beta chains.

It is found in the cytoplasm. The catalysed reaction is N(2)-acetyl-L-ornithine + L-glutamate = N-acetyl-L-glutamate + L-ornithine. It carries out the reaction L-glutamate + acetyl-CoA = N-acetyl-L-glutamate + CoA + H(+). It functions in the pathway amino-acid biosynthesis; L-arginine biosynthesis; L-ornithine and N-acetyl-L-glutamate from L-glutamate and N(2)-acetyl-L-ornithine (cyclic): step 1/1. The protein operates within amino-acid biosynthesis; L-arginine biosynthesis; N(2)-acetyl-L-ornithine from L-glutamate: step 1/4. Its function is as follows. Catalyzes two activities which are involved in the cyclic version of arginine biosynthesis: the synthesis of N-acetylglutamate from glutamate and acetyl-CoA as the acetyl donor, and of ornithine by transacetylation between N(2)-acetylornithine and glutamate. The polypeptide is Arginine biosynthesis bifunctional protein ArgJ (Bacillus anthracis).